Reading from the N-terminus, the 130-residue chain is Small ribosomal subunit protein uS11c (130 aa).

Belongs to the universal ribosomal protein uS11 family. As to quaternary structure, part of the 30S ribosomal subunit.

The protein resides in the plastid. It localises to the chloroplast. The sequence is that of Small ribosomal subunit protein uS11c from Spirogyra maxima (Green alga).